Here is a 360-residue protein sequence, read N- to C-terminus: Ferredoxin--NADP reductase 1 (360 aa).

Asp43, Gln51, Tyr56, Ala96, Phe141, Asp307, and Ser348 together coordinate FAD.

It belongs to the ferredoxin--NADP reductase type 2 family. As to quaternary structure, homodimer. FAD is required as a cofactor.

It catalyses the reaction 2 reduced [2Fe-2S]-[ferredoxin] + NADP(+) + H(+) = 2 oxidized [2Fe-2S]-[ferredoxin] + NADPH. The protein is Ferredoxin--NADP reductase 1 of Cupriavidus taiwanensis (strain DSM 17343 / BCRC 17206 / CCUG 44338 / CIP 107171 / LMG 19424 / R1) (Ralstonia taiwanensis (strain LMG 19424)).